The following is a 482-amino-acid chain: O-acyltransferase ausP (482 aa).

Residues histidine 180 and aspartate 412 each act as proton acceptor in the active site.

The protein belongs to the plant acyltransferase family. In terms of assembly, monomer.

Its pathway is secondary metabolite biosynthesis; terpenoid biosynthesis. Its function is as follows. O-acyltransferase; part of the gene cluster B that mediates the biosynthesis of the fungal meroterpenoid acetoxydehydroaustin. The first step of the pathway is the synthesis of 3,5-dimethylorsellinic acid by the polyketide synthase ausA. 3,5-dimethylorsellinic acid is then prenylated by the polyprenyl transferase ausN. Further epoxidation by the FAD-dependent monooxygenase ausM and cyclization by the probable terpene cyclase ausL lead to the formation of protoaustinoid A. Protoaustinoid A is then oxidized to spiro-lactone preaustinoid A3 by the combined action of the FAD-binding monooxygenases ausB and ausC, and the dioxygenase ausE. Acid-catalyzed keto-rearrangement and ring contraction of the tetraketide portion of preaustinoid A3 by ausJ lead to the formation of preaustinoid A4. The aldo-keto reductase ausK, with the help of ausH, is involved in the next step by transforming preaustinoid A4 into isoaustinone which is in turn hydroxylated by the P450 monooxygenase ausI to form austinolide. The cytochrome P450 monooxygenase ausG then modifies austinolide to austinol. Austinol is further acetylated to austin by the O-acetyltransferase ausP, which spontaneously changes to dehydroaustin. The cytochrome P450 monooxygenase then converts dehydroaustin is into 7-dehydrodehydroaustin. The hydroxylation catalyzed by ausR permits the second O-acetyltransferase ausQ to add an additional acetyl group to the molecule, leading to the formation of acetoxydehydroaustin. Due to genetic rearrangements of the clusters and the subsequent loss of some enzymes, the end product of the Penicillium brasilianum austinoid biosynthesis clusters is acetoxydehydroaustin. This Penicillium brasilianum protein is O-acyltransferase ausP.